The primary structure comprises 118 residues: Non-specific lipid-transfer protein (118 aa).

An N-terminal signal peptide occupies residues Met1–Ala25. 4 cysteine pairs are disulfide-bonded: Cys30-Cys76, Cys40-Cys53, Cys54-Cys98, and Cys74-Cys113.

This sequence belongs to the plant LTP family.

Plant non-specific lipid-transfer proteins transfer phospholipids as well as galactolipids across membranes. May play a role in wax or cutin deposition in the cell walls of expanding epidermal cells and certain secretory tissues. In Ambrosia artemisiifolia (Common ragweed), this protein is Non-specific lipid-transfer protein.